Here is a 505-residue protein sequence, read N- to C-terminus: Pup deamidase/depupylase (505 aa).

Position 6 to 10 (6 to 10) interacts with ATP; that stretch reads GTEVE. Mg(2+)-binding residues include glutamate 8 and tyrosine 93. The Proton acceptor role is filled by aspartate 95. Mg(2+) is bound at residue glutamate 100. Residue 102-103 coordinates ATP; it reads SA. Histidine 156 serves as a coordination point for Mg(2+). ATP contacts are provided by asparagine 158 and arginine 240. Histidine 242 provides a ligand contact to Mg(2+).

Belongs to the Pup ligase/Pup deamidase family. Pup deamidase subfamily. In terms of assembly, interacts with the prokaryotic ubiquitin-like protein Pup. The cofactor is ATP.

The enzyme catalyses [prokaryotic ubiquitin-like protein]-C-terminal-L-glutamine + H2O = [prokaryotic ubiquitin-like protein]-C-terminal-L-glutamate + NH4(+). Its pathway is protein degradation; proteasomal Pup-dependent pathway. Functionally, specifically catalyzes the deamidation of the C-terminal glutamine of the prokaryotic ubiquitin-like protein Pup to glutamate, thereby rendering Pup competent for conjugation. Also displays depupylase (DPUP) activity, removing conjugated Pup from target proteins; is thus involved in the recycling of Pup and may function similarly to deubiquitinases (DUBs) in eukaryotes to prevent or promote proteasomal degradation of certain proteins. The protein is Pup deamidase/depupylase (dop) of Mycobacterium tuberculosis (strain CDC 1551 / Oshkosh).